The following is a 116-amino-acid chain: Ribosome-binding factor A (116 aa).

Belongs to the RbfA family. Monomer. Binds 30S ribosomal subunits, but not 50S ribosomal subunits or 70S ribosomes.

The protein localises to the cytoplasm. Functionally, one of several proteins that assist in the late maturation steps of the functional core of the 30S ribosomal subunit. Associates with free 30S ribosomal subunits (but not with 30S subunits that are part of 70S ribosomes or polysomes). Required for efficient processing of 16S rRNA. May interact with the 5'-terminal helix region of 16S rRNA. This Streptococcus pneumoniae (strain ATCC BAA-255 / R6) protein is Ribosome-binding factor A.